The following is a 199-amino-acid chain: MKQSHFFAHLSRLKLINRWPLMRNVRTENVSEHSLQVAMVAHALAAIKNRKFGGNVNAERIALLAMYHDASEVLTGDLPTPVKYFNSQIAQEYKAIEKIAQQKLVDMVPEELRDIFAPLIDEHAYSDEEKSLVKQADALCAYLKCLEELAAGNNEFLLAKTRLEATLEARRSQEMDYFMEVFVPSFHLSLDEISQDSPL.

Substrate-binding positions include 18 to 19 and histidine 33; that span reads RW. The region spanning 30–142 is the HD domain; sequence VSEHSLQVAM…VKQADALCAY (113 aa). Residues histidine 33, histidine 68, and aspartate 69 each coordinate a divalent metal cation. Residues aspartate 69, 77–80, and aspartate 137 each bind substrate; that span reads DLPT. Residue aspartate 137 coordinates a divalent metal cation.

Belongs to the 5DNU family. In terms of assembly, homodimer. The cofactor is a divalent metal cation.

The protein localises to the cytoplasm. The catalysed reaction is a 2'-deoxyribonucleoside 5'-phosphate + H2O = a 2'-deoxyribonucleoside + phosphate. Functionally, catalyzes the strictly specific dephosphorylation of 2'-deoxyribonucleoside 5'-monophosphates. The chain is 5'-deoxynucleotidase YfbR from Escherichia coli (strain 55989 / EAEC).